The primary structure comprises 338 residues: Glycerol-3-phosphate dehydrogenase [NAD(P)+] (338 aa).

Residues Ser-13, Trp-14, and Lys-108 each contribute to the NADPH site. The sn-glycerol 3-phosphate site is built by Lys-108, Gly-139, and Ser-141. Residue Ala-143 participates in NADPH binding. 5 residues coordinate sn-glycerol 3-phosphate: Lys-194, Asp-247, Ser-257, Arg-258, and Asn-259. The active-site Proton acceptor is Lys-194. Position 258 (Arg-258) interacts with NADPH. NADPH is bound by residues Val-282 and Glu-284.

Belongs to the NAD-dependent glycerol-3-phosphate dehydrogenase family.

The protein localises to the cytoplasm. It carries out the reaction sn-glycerol 3-phosphate + NAD(+) = dihydroxyacetone phosphate + NADH + H(+). The enzyme catalyses sn-glycerol 3-phosphate + NADP(+) = dihydroxyacetone phosphate + NADPH + H(+). Its pathway is membrane lipid metabolism; glycerophospholipid metabolism. Catalyzes the reduction of the glycolytic intermediate dihydroxyacetone phosphate (DHAP) to sn-glycerol 3-phosphate (G3P), the key precursor for phospholipid synthesis. This Streptococcus gordonii (strain Challis / ATCC 35105 / BCRC 15272 / CH1 / DL1 / V288) protein is Glycerol-3-phosphate dehydrogenase [NAD(P)+].